Here is a 338-residue protein sequence, read N- to C-terminus: MTQKKVAILGAGSWGTGLALVLADNNHKPVIWGNLDKIVNEINESHTNSHYLPDIILPTEVKATLSLDEAIDGAEIVVIAIPTNAMRIVCKQLNEALKEPTILVHVSKGIEPETNLRMSEVIEEEIDAAKRKALVVLSGPSHAEEVALRHPTTLCASCKDLTAAEIVQDRFINNNLRIYTNDDVIGAEIGGALKNIIALGAGISDGLGYGDNAKAALMTRGMAEITRLGVAVGSNPQTFYGLTGIGDLIVTCTSVHSRNWRAGNMLGKGENLDEVLEKMGMVVEGVRTAKAVHGWAKKLDIDMPITESIYAILFENKDAREAVDLLMGRKKKIEKESF.

NADPH-binding residues include Ser-13, Trp-14, and Lys-108. Residues Lys-108, Gly-139, and Ser-141 each coordinate sn-glycerol 3-phosphate. Ala-143 is an NADPH binding site. Sn-glycerol 3-phosphate contacts are provided by Lys-194, Asp-247, Ser-257, Arg-258, and Asn-259. Lys-194 serves as the catalytic Proton acceptor. Arg-258 lines the NADPH pocket. 2 residues coordinate NADPH: Val-282 and Glu-284.

It belongs to the NAD-dependent glycerol-3-phosphate dehydrogenase family.

The protein resides in the cytoplasm. It carries out the reaction sn-glycerol 3-phosphate + NAD(+) = dihydroxyacetone phosphate + NADH + H(+). It catalyses the reaction sn-glycerol 3-phosphate + NADP(+) = dihydroxyacetone phosphate + NADPH + H(+). It functions in the pathway membrane lipid metabolism; glycerophospholipid metabolism. Its function is as follows. Catalyzes the reduction of the glycolytic intermediate dihydroxyacetone phosphate (DHAP) to sn-glycerol 3-phosphate (G3P), the key precursor for phospholipid synthesis. The sequence is that of Glycerol-3-phosphate dehydrogenase [NAD(P)+] from Listeria monocytogenes serotype 4a (strain HCC23).